We begin with the raw amino-acid sequence, 375 residues long: Histidine biosynthesis bifunctional protein HisB (375 aa).

Positions 1 to 168 (MTPIVFIDRD…GIAHTLADAP (168 aa)) are histidinol-phosphatase. The active-site Nucleophile is the D8. Positions 8, 10, and 128 each coordinate Mg(2+). D10 functions as the Proton donor in the catalytic mechanism. The tract at residues 169 to 375 (RRAVVQRHTK…HVLPSTKGAL (207 aa)) is imidazoleglycerol-phosphate dehydratase.

This sequence in the N-terminal section; belongs to the histidinol-phosphatase family. The protein in the C-terminal section; belongs to the imidazoleglycerol-phosphate dehydratase family. Requires Mg(2+) as cofactor.

It localises to the cytoplasm. The enzyme catalyses D-erythro-1-(imidazol-4-yl)glycerol 3-phosphate = 3-(imidazol-4-yl)-2-oxopropyl phosphate + H2O. The catalysed reaction is L-histidinol phosphate + H2O = L-histidinol + phosphate. The protein operates within amino-acid biosynthesis; L-histidine biosynthesis; L-histidine from 5-phospho-alpha-D-ribose 1-diphosphate: step 6/9. It functions in the pathway amino-acid biosynthesis; L-histidine biosynthesis; L-histidine from 5-phospho-alpha-D-ribose 1-diphosphate: step 8/9. This is Histidine biosynthesis bifunctional protein HisB from Xylella fastidiosa (strain 9a5c).